The primary structure comprises 364 residues: N-alpha-acetyltransferase 30 (364 aa).

The span at 1-18 (MAEVPPGPSSLLPPPAPA) shows a compositional bias: pro residues. Disordered regions lie at residues 1–21 (MAEV…AAPA), 39–65 (SEDE…TSAK), and 110–164 (EAAA…SDPA). Phosphoserine occurs at positions 39 and 54. Positions 39-48 (SEDEEDDEEH) are enriched in acidic residues. A compositionally biased stretch (basic and acidic residues) spans 126 to 135 (AEGHPGERPP). Residues 152 to 164 (AAAAAAGAASDPA) show a composition bias toward low complexity. Residues Ser192, Ser198, and Ser201 each carry the phosphoserine modification. The 149-residue stretch at 216–364 (RYVRYESELQ…DALRLKLWLR (149 aa)) folds into the N-acetyltransferase domain. Lys235 is modified (N6-acetyllysine).

It belongs to the acetyltransferase family. MAK3 subfamily. In terms of assembly, component of the N-terminal acetyltransferase C (NatC) complex, which is composed of NAA35, NAA38 and NAA30.

The protein resides in the cytoplasm. It is found in the nucleus. The catalysed reaction is N-terminal L-methionyl-L-leucyl-[protein] + acetyl-CoA = N-terminal N(alpha)-acetyl-L-methionyl-L-leucyl-[protein] + CoA + H(+). It carries out the reaction N-terminal L-methionyl-L-isoleucyl-[protein] + acetyl-CoA = N-terminal N(alpha)-acetyl-L-methionyl-L-isoleucyl-[protein] + CoA + H(+). The enzyme catalyses N-terminal L-methionyl-L-phenylalanyl-[protein] + acetyl-CoA = N-terminal N(alpha)-acetyl-L-methionyl-L-phenylalanyl-[protein] + CoA + H(+). It catalyses the reaction N-terminal L-methionyl-L-tryptophyl-[protein] + acetyl-CoA = N-terminal N(alpha)-acetyl-L-methionyl-L-tryptophyl-[protein] + CoA + H(+). The catalysed reaction is N-terminal L-methionyl-L-tyrosyl-[protein] + acetyl-CoA = N-terminal N(alpha)-acetyl-L-methionyl-L-tyrosyl-[protein] + CoA + H(+). In terms of biological role, catalytic subunit of the N-terminal acetyltransferase C (NatC) complex. Catalyzes acetylation of the N-terminal methionine residues of peptides beginning with Met-Leu-Ala and Met-Leu-Gly. N-terminal acetylation protects proteins from ubiquitination and degradation by the N-end rule pathway. Necessary for the lysosomal localization and function of ARL8B sugeesting that ARL8B is a NatC substrate. The chain is N-alpha-acetyltransferase 30 (Naa30) from Mus musculus (Mouse).